The sequence spans 235 residues: Ubiquinone biosynthesis O-methyltransferase (235 aa).

S-adenosyl-L-methionine contacts are provided by R40, G60, D81, and M125.

This sequence belongs to the methyltransferase superfamily. UbiG/COQ3 family.

It carries out the reaction a 3-demethylubiquinol + S-adenosyl-L-methionine = a ubiquinol + S-adenosyl-L-homocysteine + H(+). The catalysed reaction is a 3-(all-trans-polyprenyl)benzene-1,2-diol + S-adenosyl-L-methionine = a 2-methoxy-6-(all-trans-polyprenyl)phenol + S-adenosyl-L-homocysteine + H(+). It participates in cofactor biosynthesis; ubiquinone biosynthesis. In terms of biological role, O-methyltransferase that catalyzes the 2 O-methylation steps in the ubiquinone biosynthetic pathway. This Nitrosomonas europaea (strain ATCC 19718 / CIP 103999 / KCTC 2705 / NBRC 14298) protein is Ubiquinone biosynthesis O-methyltransferase.